Here is a 496-residue protein sequence, read N- to C-terminus: 3-octaprenyl-4-hydroxybenzoate carboxy-lyase (496 aa).

N181 is a binding site for Mn(2+). Prenylated FMN contacts are provided by residues 184–186, 198–200, and 203–204; these read IYR, RWL, and RG. Mn(2+) is bound at residue E247. D296 (proton donor) is an active-site residue.

Belongs to the UbiD family. In terms of assembly, homohexamer. The cofactor is prenylated FMN. Requires Mn(2+) as cofactor.

The protein resides in the cell membrane. It catalyses the reaction a 4-hydroxy-3-(all-trans-polyprenyl)benzoate + H(+) = a 2-(all-trans-polyprenyl)phenol + CO2. The protein operates within cofactor biosynthesis; ubiquinone biosynthesis. Functionally, catalyzes the decarboxylation of 3-octaprenyl-4-hydroxy benzoate to 2-octaprenylphenol, an intermediate step in ubiquinone biosynthesis. The protein is 3-octaprenyl-4-hydroxybenzoate carboxy-lyase of Aromatoleum aromaticum (strain DSM 19018 / LMG 30748 / EbN1) (Azoarcus sp. (strain EbN1)).